Here is a 274-residue protein sequence, read N- to C-terminus: MSSQLQQVIEAAWEDRANLSVASAPAAVREAVAHVLGELDAGRIRVAERQAVGQWQVNQWVKKAVLLSFRLNDNVVMGDGALTFFDKVPSKFGGMDEAALRATGVRVVPPAVARRGSFIARGAILMPSYVNIGAYVDEGTMVDTWATVGSCAQIGKNVHLSGGVGIGGVLEPLQAGPTIIEDNCFIGARSEVVEGVVVEENSVISMGVYIGQSTKIYDRATGEVTYGRIPSGSVVVSGNLPSADGKYSLYCAVIVKRVDAQTRAKTSINDLLRG.

The protein belongs to the transferase hexapeptide repeat family.

The protein localises to the cytoplasm. The catalysed reaction is (S)-2,3,4,5-tetrahydrodipicolinate + succinyl-CoA + H2O = (S)-2-succinylamino-6-oxoheptanedioate + CoA. It functions in the pathway amino-acid biosynthesis; L-lysine biosynthesis via DAP pathway; LL-2,6-diaminopimelate from (S)-tetrahydrodipicolinate (succinylase route): step 1/3. This is 2,3,4,5-tetrahydropyridine-2,6-dicarboxylate N-succinyltransferase from Leptothrix cholodnii (strain ATCC 51168 / LMG 8142 / SP-6) (Leptothrix discophora (strain SP-6)).